The primary structure comprises 553 residues: Dihydroxy-acid dehydratase (553 aa).

Position 78 (aspartate 78) interacts with Mg(2+). Cysteine 119 contributes to the [2Fe-2S] cluster binding site. Aspartate 120 and lysine 121 together coordinate Mg(2+). Lysine 121 is modified (N6-carboxylysine). Cysteine 191 contributes to the [2Fe-2S] cluster binding site. Glutamate 442 contributes to the Mg(2+) binding site. The active-site Proton acceptor is serine 468.

It belongs to the IlvD/Edd family. In terms of assembly, homodimer. Requires [2Fe-2S] cluster as cofactor. It depends on Mg(2+) as a cofactor.

The catalysed reaction is (2R)-2,3-dihydroxy-3-methylbutanoate = 3-methyl-2-oxobutanoate + H2O. It carries out the reaction (2R,3R)-2,3-dihydroxy-3-methylpentanoate = (S)-3-methyl-2-oxopentanoate + H2O. The protein operates within amino-acid biosynthesis; L-isoleucine biosynthesis; L-isoleucine from 2-oxobutanoate: step 3/4. It functions in the pathway amino-acid biosynthesis; L-valine biosynthesis; L-valine from pyruvate: step 3/4. In terms of biological role, functions in the biosynthesis of branched-chain amino acids. Catalyzes the dehydration of (2R,3R)-2,3-dihydroxy-3-methylpentanoate (2,3-dihydroxy-3-methylvalerate) into 2-oxo-3-methylpentanoate (2-oxo-3-methylvalerate) and of (2R)-2,3-dihydroxy-3-methylbutanoate (2,3-dihydroxyisovalerate) into 2-oxo-3-methylbutanoate (2-oxoisovalerate), the penultimate precursor to L-isoleucine and L-valine, respectively. The sequence is that of Dihydroxy-acid dehydratase from Carboxydothermus hydrogenoformans (strain ATCC BAA-161 / DSM 6008 / Z-2901).